We begin with the raw amino-acid sequence, 451 residues long: Trigger factor (451 aa).

Residues 165-250 (DDKLTIDFEG…LHQIQAREAL (86 aa)) enclose the PPIase FKBP-type domain.

The protein belongs to the FKBP-type PPIase family. Tig subfamily.

The protein localises to the cytoplasm. The catalysed reaction is [protein]-peptidylproline (omega=180) = [protein]-peptidylproline (omega=0). Involved in protein export. Acts as a chaperone by maintaining the newly synthesized protein in an open conformation. Functions as a peptidyl-prolyl cis-trans isomerase. The sequence is that of Trigger factor from Helicobacter pylori (strain G27).